Here is a 341-residue protein sequence, read N- to C-terminus: MPSIRLADLAEQLDAELHGDGDIVITGVASMQSATTGHITFMVNPKYREHLGLCQASAVVMTQDDLPFAKSAALVVKNPYLTYARMAQILDTTPQPAQNIAPSAVIDATATLGSNVSVGANAVIESGVQLGDNVVIGAGCFVGKNSKIGAGSRLWANVTIYHDIQIGENCLIQSSTVIGADGFGYANDRGNWVKIPQLGRVIIGDRVEIGACTTIDRGALDDTVIGNGVIIDNQCQIAHNVVIGDNTAVAGGVIMAGSLKIGRYCMIGGASVINGHMEICDKVTVTGMGMVMRPITEPGVYSSGIPLQPNKVWRKTAALVMNIDDMSKRLKAIERTVNQQD.

The active-site Proton acceptor is His-239.

The protein belongs to the transferase hexapeptide repeat family. LpxD subfamily. In terms of assembly, homotrimer.

The enzyme catalyses a UDP-3-O-[(3R)-3-hydroxyacyl]-alpha-D-glucosamine + a (3R)-hydroxyacyl-[ACP] = a UDP-2-N,3-O-bis[(3R)-3-hydroxyacyl]-alpha-D-glucosamine + holo-[ACP] + H(+). It carries out the reaction UDP-3-O-[(3R)-3-hydroxytetradecanoyl]-alpha-D-glucosamine + (3R)-hydroxytetradecanoyl-[ACP] = UDP-2-N,3-O-bis[(3R)-3-hydroxytetradecanoyl]-alpha-D-glucosamine + holo-[ACP] + H(+). It participates in glycolipid biosynthesis; lipid IV(A) biosynthesis; lipid IV(A) from (3R)-3-hydroxytetradecanoyl-[acyl-carrier-protein] and UDP-N-acetyl-alpha-D-glucosamine: step 3/6. Functionally, catalyzes the N-acylation of UDP-3-O-(hydroxytetradecanoyl)glucosamine using 3-hydroxytetradecanoyl-ACP as the acyl donor. Is involved in the biosynthesis of lipid A, a phosphorylated glycolipid that anchors the lipopolysaccharide to the outer membrane of the cell. The sequence is that of UDP-3-O-(3-hydroxymyristoyl)glucosamine N-acyltransferase from Salmonella choleraesuis (strain SC-B67).